The following is a 249-amino-acid chain: AA9 family lytic polysaccharide monooxygenase A (249 aa).

Residues 1–19 (MRGPLCFTLIAIAVTSVVA) form the signal peptide. Residues His20 and His97 each coordinate Cu(2+). Cys60 and Cys183 are disulfide-bonded. Position 163 (His163) interacts with O2. Cu(2+) is bound at residue Tyr180.

It belongs to the polysaccharide monooxygenase AA9 family. It depends on Cu(2+) as a cofactor.

It is found in the secreted. The enzyme catalyses [(1-&gt;4)-beta-D-glucosyl]n+m + reduced acceptor + O2 = 4-dehydro-beta-D-glucosyl-[(1-&gt;4)-beta-D-glucosyl]n-1 + [(1-&gt;4)-beta-D-glucosyl]m + acceptor + H2O.. In terms of biological role, lytic polysaccharide monooxygenase (LPMO) that depolymerizes crystalline and amorphous polysaccharides via the oxidation of scissile alpha- or beta-(1-4)-glycosidic bonds, yielding C4 oxidation products. Catalysis by LPMOs requires the reduction of the active-site copper from Cu(II) to Cu(I) by a reducing agent and H(2)O(2) or O(2) as a cosubstrate. Active on cellulose and cello-oligosaccharides, as well as plant cell wall-derived hemicellulosic polysaccharides. Also active on cello-oligosaccharides such as cellohexaose, cellopentaose or cellotetraose. The sequence is that of AA9 family lytic polysaccharide monooxygenase A from Armillaria gallica (Bulbous honey fungus).